A 326-amino-acid chain; its full sequence is Peroxidase 3 (326 aa).

The first 24 residues, 1 to 24, serve as a signal peptide directing secretion; that stretch reads MNCLIAIALSVSFFLVGIVGPIQA. Intrachain disulfides connect Cys35–Cys113, Cys68–Cys73, Cys119–Cys321, and Cys198–Cys231. Residue His66 is the Proton acceptor of the active site. Ca(2+) is bound by residues Asp67, Val70, Gly72, Asp74, and Ser76. Residues Asn80 and Asn138 are each glycosylated (N-linked (GlcNAc...) asparagine). Pro161 contributes to the substrate binding site. The N-linked (GlcNAc...) asparagine glycan is linked to Asn166. Residue His191 coordinates heme b. Residue Thr192 participates in Ca(2+) binding. N-linked (GlcNAc...) asparagine glycans are attached at residues Asn207 and Asn237. The Ca(2+) site is built by Asp244, Ser247, and Asp252.

It belongs to the peroxidase family. Classical plant (class III) peroxidase subfamily. The cofactor is heme b. Requires Ca(2+) as cofactor. In terms of tissue distribution, expressed in root cells.

The protein localises to the secreted. It carries out the reaction 2 a phenolic donor + H2O2 = 2 a phenolic radical donor + 2 H2O. Its function is as follows. Removal of H(2)O(2), oxidation of toxic reductants, biosynthesis and degradation of lignin, suberization, auxin catabolism, response to environmental stresses such as wounding, pathogen attack and oxidative stress. These functions might be dependent on each isozyme/isoform in each plant tissue. The chain is Peroxidase 3 (PER3) from Arabidopsis thaliana (Mouse-ear cress).